A 346-amino-acid chain; its full sequence is MNNLKWVAYFLKSRMNWIFWILFLNLLMLGISLIDYDFPIDSLFYIVSLNLSLTMIFLILTYFKEVKLYKHFDKDKEIEEIKHKDLAETPFQRHTVDYLYRQISAHKEKVVEQQLQLNMHEQTITEFVHDIKTPVTAMKLLIDQEKNQERKQALLYEWSRINSMLDTQLYITRLESQRKDMYFDYVSLKRMVIDEIQLTRHISQVKGIGFDVDFKVDDYVYTDIKWCRMIIRQILSNALKYSENFNIEIGTELNDQHVSLYIKDYGRGISKKDMPRIFERGFTSTANRNETTSSGMGLYLVNSVKDQLGIHLQVTSTVGKGTTVRLIFPLQNEIVERMSEVTNLSF.

The next 2 membrane-spanning stretches (helical) occupy residues 15-35 and 43-63; these read MNWI…SLID and LFYI…LTYF. A Histidine kinase domain is found at 126-332; it reads EFVHDIKTPV…TVRLIFPLQN (207 aa).

As to quaternary structure, interacts with GraX.

The protein resides in the cell membrane. The enzyme catalyses ATP + protein L-histidine = ADP + protein N-phospho-L-histidine.. Functionally, member of the two-component regulatory system GraR/GraS involved in resistance against cationic antimicrobial peptides (CAMPs). Functions as a sensor protein kinase which phosphorylates GraR through the auxiliary protein GraX. In turn, GraR up-regulates many genes such as adhesins, exoproteins, transporters, toxins, and proteins involved in cell wall synthesis. Down-regulates the expression of many genes involved in RNA and amino acid synthesis or glycolysis. This chain is Sensor protein kinase GraS (graS), found in Staphylococcus aureus (strain MSSA476).